Consider the following 137-residue polypeptide: Seminal plasma sperm motility inhibitor (137 aa).

A signal peptide spans 1 to 21 (MKLGSAIPWALLLSTXTLVST). A disulfide bond links C30 and C51. A CUB domain is found at 30-131 (CGGFLKNYSG…SSFNVYFYGI (102 aa)). The N-linked (GlcNAc...) asparagine glycan is linked to N36.

It belongs to the spermadhesin family. As to expression, seminal plasma or sperm.

The protein resides in the secreted. In terms of biological role, inhibitor of sperm motility. This is Seminal plasma sperm motility inhibitor (SPMI) from Sus scrofa (Pig).